A 609-amino-acid polypeptide reads, in one-letter code: Sterol O-acyltransferase 2 (609 aa).

The segment covering 1 to 15 (MGRTNTSDQLNAISD) has biased composition (polar residues). The disordered stretch occupies residues 1 to 41 (MGRTNTSDQLNAISDKNTKRKSLALDNEYHNNSSSEDDSSK). The next 6 membrane-spanning stretches (helical) occupy residues 152 to 172 (FFGMYVLFWLATAFAMVNNLI), 195 to 215 (LFKVGLVDLAMYLSTYFAFFV), 229 to 249 (VGWWLQAAFDGLFLFFWLWIA), 253 to 273 (CLDFPWIAKVFLVLHSLVFIM), 402 to 422 (WSYVFGKTFGIFGLIFLMILI), and 451 to 471 (FLLMDMIPPFLMVYLFTFFLI). An FYXDWWN motif motif is present at residues 490-496 (FYGPWWS). 2 helical membrane passes run 534–554 (AAIITFLLSSLVHELVMYVIF) and 589–609 (IICWFGFISGPSIICTLYLVF). H546 is a catalytic residue.

This sequence belongs to the membrane-bound acyltransferase family. Sterol o-acyltransferase subfamily.

The protein localises to the endoplasmic reticulum membrane. Its activity is regulated as follows. Inhibited by the protoberberine derivative HWY-289 in a non-competitive manner. Inhibited by miconazole. Not inhibited by CI-976, polyoxin D, amphotericin B or nikkomycin Z. Its function is as follows. Sterol O-acyltransferase that catalyzes the formation of stery esters. The protein is Sterol O-acyltransferase 2 of Candida albicans (Yeast).